Consider the following 445-residue polypeptide: tRNA-2-methylthio-N(6)-dimethylallyladenosine synthase (445 aa).

One can recognise an MTTase N-terminal domain in the interval 9-125 (LKYRILTYGC…LPYLIARAKE (117 aa)). [4Fe-4S] cluster is bound by residues C18, C54, C88, C162, C166, and C169. The Radical SAM core domain occupies 148-378 (RKPGLSAFVN…NRRQYQIATE (231 aa)). A TRAM domain is found at 381–444 (QELQGSIQEV…TFSLFGEIFN (64 aa)).

The protein belongs to the methylthiotransferase family. MiaB subfamily. Monomer. It depends on [4Fe-4S] cluster as a cofactor.

The protein localises to the cytoplasm. It carries out the reaction N(6)-dimethylallyladenosine(37) in tRNA + (sulfur carrier)-SH + AH2 + 2 S-adenosyl-L-methionine = 2-methylsulfanyl-N(6)-dimethylallyladenosine(37) in tRNA + (sulfur carrier)-H + 5'-deoxyadenosine + L-methionine + A + S-adenosyl-L-homocysteine + 2 H(+). Catalyzes the methylthiolation of N6-(dimethylallyl)adenosine (i(6)A), leading to the formation of 2-methylthio-N6-(dimethylallyl)adenosine (ms(2)i(6)A) at position 37 in tRNAs that read codons beginning with uridine. This Syntrophomonas wolfei subsp. wolfei (strain DSM 2245B / Goettingen) protein is tRNA-2-methylthio-N(6)-dimethylallyladenosine synthase.